The sequence spans 99 residues: Integration host factor subunit beta (99 aa).

Belongs to the bacterial histone-like protein family. In terms of assembly, heterodimer of an alpha and a beta chain.

This protein is one of the two subunits of integration host factor, a specific DNA-binding protein that functions in genetic recombination as well as in transcriptional and translational control. The polypeptide is Integration host factor subunit beta (Laribacter hongkongensis (strain HLHK9)).